The following is a 517-amino-acid chain: GMP synthase [glutamine-hydrolyzing] (517 aa).

One can recognise a Glutamine amidotransferase type-1 domain in the interval 9-199; the sequence is RILILDFGSQ…VLGVCGCERL (191 aa). The active-site Nucleophile is Cys86. Residues His173 and Glu175 contribute to the active site. Positions 200-392 constitute a GMPS ATP-PPase domain; that stretch reads WTSESIIEDA…LGLPYEMLYR (193 aa). Residue 227 to 233 participates in ATP binding; sequence SGGVDSS.

As to quaternary structure, homodimer.

It carries out the reaction XMP + L-glutamine + ATP + H2O = GMP + L-glutamate + AMP + diphosphate + 2 H(+). Its pathway is purine metabolism; GMP biosynthesis; GMP from XMP (L-Gln route): step 1/1. Catalyzes the synthesis of GMP from XMP. The protein is GMP synthase [glutamine-hydrolyzing] of Vibrio vulnificus (strain YJ016).